The sequence spans 231 residues: Allergen Ani s 10 (231 aa).

A signal peptide spans methionine 1–serine 19. Tandem repeats lie at residues glycine 28–isoleucine 56, glycine 57–isoleucine 85, glycine 86–isoleucine 114, glutamate 115–isoleucine 143, glutamate 144–isoleucine 172, glycine 173–isoleucine 201, and glycine 204–alanine 231. Positions glycine 28–isoleucine 201 are 6 X 29 AA tandem repeats of [EG]-G-P-G-P-V-[IV]-[SG]-G-S-G-I-G-[ND]-V-W-[NE]-K-A-N-E-[QP]-A-[AE]-[QEH]-Q-[EQ]-[NS]-I. Disordered regions lie at residues glutamine 107–isoleucine 126 and asparagine 134–alanine 231. Composition is skewed to low complexity over residues isoleucine 114–glycine 123, isoleucine 143–glycine 152, and proline 177–valine 187.

The chain is Allergen Ani s 10 from Anisakis simplex (Herring worm).